The sequence spans 353 residues: MSSQDIPEENLPAEQDRPHGAAARPADETNPFADPGLPPHEPRVQDVDERAAKRSERTVALLFTLSMLATIAFIAAFVAIDVDKSVYIFPLGHISALNFALGMTLGVALFAIGAGAVHWARTLMSDEEVADERHPIEASPEVRAKVHADFKQGAKESVIGRRKLIRNTMLGALTLVPLSGVVLLRDLGPLPGTKLRHTLWSKGKLLVNMNTNEPLRPSDVAVGSLTFAMPEGLEEHDEDFQNEIAKAALMIIRLEPDSIKDKRELEWSHEGIVAYSKICTHVGCPISLYEQQTHHALCPCHQSTFDLADGARVIFGPAGHALPQLRIGVNDEGYLEALGDFEEPVGPAYWERG.

The disordered stretch occupies residues 1–51 (MSSQDIPEENLPAEQDRPHGAAARPADETNPFADPGLPPHEPRVQDVDERA). Residues 40 to 51 (HEPRVQDVDERA) are compositionally biased toward basic and acidic residues. The next 3 membrane-spanning stretches (helical) occupy residues 60–80 (ALLF…FVAI), 99–119 (FALG…AVHW), and 164–184 (LIRN…VVLL). The region spanning 246–336 (KAALMIIRLE…IGVNDEGYLE (91 aa)) is the Rieske domain. [2Fe-2S] cluster contacts are provided by C279, H281, C298, and H301. C284 and C300 are disulfide-bonded.

The protein belongs to the Rieske iron-sulfur protein family. In terms of assembly, the cytochrome bc1 complex is composed of a cytochrome b (QcrB), the Rieske iron-sulfur protein (QcrA) and a diheme cytochrome c (QcrC) subunit. [2Fe-2S] cluster is required as a cofactor.

The protein resides in the cell membrane. Functionally, iron-sulfur subunit of the cytochrome bc1 complex, an essential component of the respiratory electron transport chain required for ATP synthesis. The bc1 complex catalyzes the oxidation of menaquinol and the reduction of cytochrome c in the respiratory chain. The bc1 complex operates through a Q-cycle mechanism that couples electron transfer to generation of the proton gradient that drives ATP synthesis. This chain is Cytochrome bc1 complex Rieske iron-sulfur subunit (qcrA), found in Streptomyces coelicolor (strain ATCC BAA-471 / A3(2) / M145).